We begin with the raw amino-acid sequence, 266 residues long: 2-C-methyl-D-erythritol 4-phosphate cytidylyltransferase (266 aa).

A compositionally biased stretch (basic and acidic residues) spans 234-251; sequence ADDARSAEARSAEARSEE. Residues 234 to 266 are disordered; the sequence is ADDARSAEARSAEARSEEPQFAGARSTDARSGG.

The protein belongs to the IspD/TarI cytidylyltransferase family. IspD subfamily.

The catalysed reaction is 2-C-methyl-D-erythritol 4-phosphate + CTP + H(+) = 4-CDP-2-C-methyl-D-erythritol + diphosphate. It participates in isoprenoid biosynthesis; isopentenyl diphosphate biosynthesis via DXP pathway; isopentenyl diphosphate from 1-deoxy-D-xylulose 5-phosphate: step 2/6. In terms of biological role, catalyzes the formation of 4-diphosphocytidyl-2-C-methyl-D-erythritol from CTP and 2-C-methyl-D-erythritol 4-phosphate (MEP). In Frankia casuarinae (strain DSM 45818 / CECT 9043 / HFP020203 / CcI3), this protein is 2-C-methyl-D-erythritol 4-phosphate cytidylyltransferase.